A 69-amino-acid chain; its full sequence is Alternative ribosome-rescue factor A (69 aa).

Belongs to the alternative ribosome-rescue factor A family. Interacts with the 70S ribosome and release factor 2.

Rescues ribosomes stalled at the 3' end of non-stop mRNAs. Recruits release factor 2 (RF2) to the stalled ribosome, helping position it correctly in the ribosomal A site so its GGQ motif can hydrolyze the peptidyl-tRNA bond. This chain is Alternative ribosome-rescue factor A (arfA), found in Haemophilus influenzae (strain ATCC 51907 / DSM 11121 / KW20 / Rd).